A 292-amino-acid polypeptide reads, in one-letter code: Homoserine kinase (292 aa).

Residue 81 to 91 (RPRSGLGSSGA) participates in ATP binding.

It belongs to the GHMP kinase family. Homoserine kinase subfamily.

The protein resides in the cytoplasm. It carries out the reaction L-homoserine + ATP = O-phospho-L-homoserine + ADP + H(+). It functions in the pathway amino-acid biosynthesis; L-threonine biosynthesis; L-threonine from L-aspartate: step 4/5. Its function is as follows. Catalyzes the ATP-dependent phosphorylation of L-homoserine to L-homoserine phosphate. The protein is Homoserine kinase of Thermococcus gammatolerans (strain DSM 15229 / JCM 11827 / EJ3).